The following is a 210-amino-acid chain: Putative odorant-binding protein A5 (210 aa).

Positions 1–19 are cleaved as a signal peptide; it reads MKLPALHLLFLGFICLARS.

This sequence belongs to the phosphatidylethanolamine-binding protein family. Cells at the bases of a few scattered sensilla on the posterior surface of the antenna.

Its subcellular location is the secreted. In Drosophila melanogaster (Fruit fly), this protein is Putative odorant-binding protein A5 (a5).